The following is a 594-amino-acid chain: Nucleolar protein 56 (594 aa).

Glycyl lysine isopeptide (Lys-Gly) (interchain with G-Cter in SUMO2) cross-links involve residues lysine 87, lysine 230, and lysine 240. The Nop domain maps to 292–410 (VAPSLSALIG…VEERLSFYET (119 aa)). Phosphoserine is present on serine 314. The residue at position 359 (arginine 359) is an Omega-N-methylarginine. 2 stretches are compositionally biased toward low complexity: residues 458 to 469 (ALASSENSSSTP) and 488 to 504 (QEVP…ISFS). The disordered stretch occupies residues 458–594 (ALASSENSSS…KKFHKASQED (137 aa)). Phosphoserine occurs at positions 466 and 467. Residue threonine 468 is modified to Phosphothreonine. A phosphoserine mark is found at serine 511, serine 519, serine 520, and serine 537. Lysine 540 participates in a covalent cross-link: Glycyl lysine isopeptide (Lys-Gly) (interchain with G-Cter in SUMO2). The residue at position 561 (lysine 561) is an N6-acetyllysine. Serine 563 carries the post-translational modification Phosphoserine. Residue lysine 564 forms a Glycyl lysine isopeptide (Lys-Gly) (interchain with G-Cter in SUMO2) linkage. Residues serine 569, serine 570, serine 579, and serine 581 each carry the phosphoserine modification. The segment covering 580–594 (SSKKKKKFHKASQED) has biased composition (basic residues).

It belongs to the NOP5/NOP56 family. As to quaternary structure, part of a large pre-ribosomal ribonucleoprotein (RNP) complex, that consists of at least 62 ribosomal proteins, 45 nonribosomal proteins and both pre-rRNA and mature rRNA species. Within this complex directly interacts with TCOF1 in an RNA-independent manner. Core component of box C/D small nucleolar ribonucleoprotein (snoRNP) particles; the core proteins SNU13, NOP56, NOP58 and FBL or FBLL1 assemble stepwise onto the snoRNA. Interacts with NOP1 and NOP58. Interacts with NUFIP1, RUVBL1 and RUVBL2; RUVBL1:RUVBL2 seem to bridge the association of NOP56 with NUFIP1. Part of the small subunit (SSU) processome, composed of more than 70 proteins and the RNA chaperone small nucleolar RNA (snoRNA) U3. Interacts with NOP2 and FBL.

It localises to the nucleus. Its subcellular location is the nucleolus. The protein localises to the cytoplasm. The protein resides in the nucleoplasm. In terms of biological role, involved in the early to middle stages of 60S ribosomal subunit biogenesis. Required for the biogenesis of box C/D snoRNAs such U3, U8 and U14 snoRNAs. Part of the small subunit (SSU) processome, first precursor of the small eukaryotic ribosomal subunit. During the assembly of the SSU processome in the nucleolus, many ribosome biogenesis factors, an RNA chaperone and ribosomal proteins associate with the nascent pre-rRNA and work in concert to generate RNA folding, modifications, rearrangements and cleavage as well as targeted degradation of pre-ribosomal RNA by the RNA exosome. Core component of box C/D small nucleolar ribonucleoprotein (snoRNP) complexes that function in methylation of multiple sites on ribosomal RNAs (rRNAs) and messenger RNAs (mRNAs). This chain is Nucleolar protein 56, found in Homo sapiens (Human).